The primary structure comprises 361 residues: Phosphoserine aminotransferase (361 aa).

Residue Arg-42 participates in L-glutamate binding. Pyridoxal 5'-phosphate is bound by residues 76 to 77 (AR), Trp-102, Thr-153, Asp-173, and Gln-196. Lys-197 carries the N6-(pyridoxal phosphate)lysine modification. 238–239 (NT) lines the pyridoxal 5'-phosphate pocket.

The protein belongs to the class-V pyridoxal-phosphate-dependent aminotransferase family. SerC subfamily. Homodimer. Requires pyridoxal 5'-phosphate as cofactor.

Its subcellular location is the cytoplasm. The enzyme catalyses O-phospho-L-serine + 2-oxoglutarate = 3-phosphooxypyruvate + L-glutamate. It carries out the reaction 4-(phosphooxy)-L-threonine + 2-oxoglutarate = (R)-3-hydroxy-2-oxo-4-phosphooxybutanoate + L-glutamate. It participates in amino-acid biosynthesis; L-serine biosynthesis; L-serine from 3-phospho-D-glycerate: step 2/3. It functions in the pathway cofactor biosynthesis; pyridoxine 5'-phosphate biosynthesis; pyridoxine 5'-phosphate from D-erythrose 4-phosphate: step 3/5. In terms of biological role, catalyzes the reversible conversion of 3-phosphohydroxypyruvate to phosphoserine and of 3-hydroxy-2-oxo-4-phosphonooxybutanoate to phosphohydroxythreonine. This is Phosphoserine aminotransferase from Pectobacterium carotovorum subsp. carotovorum (strain PC1).